A 330-amino-acid polypeptide reads, in one-letter code: Tryptophan--tRNA ligase (330 aa).

ATP contacts are provided by residues 9-11 (QPT) and 17-18 (GN). Positions 10–18 (PTGDPHIGN) match the 'HIGH' region motif. Asp136 is a binding site for L-tryptophan. ATP-binding positions include 148–150 (GED), Ile187, and 195–199 (KMSKS). Residues 195–199 (KMSKS) carry the 'KMSKS' region motif.

This sequence belongs to the class-I aminoacyl-tRNA synthetase family. In terms of assembly, homodimer.

It localises to the cytoplasm. It carries out the reaction tRNA(Trp) + L-tryptophan + ATP = L-tryptophyl-tRNA(Trp) + AMP + diphosphate + H(+). Its function is as follows. Catalyzes the attachment of tryptophan to tRNA(Trp). This chain is Tryptophan--tRNA ligase, found in Deinococcus radiodurans (strain ATCC 13939 / DSM 20539 / JCM 16871 / CCUG 27074 / LMG 4051 / NBRC 15346 / NCIMB 9279 / VKM B-1422 / R1).